The primary structure comprises 448 residues: Protein king tubby (448 aa).

Residues 103-195 are disordered; it reads HELEDEESSP…NGTGGESEGD (93 aa). The span at 118 to 133 shows a compositional bias: low complexity; that stretch reads QHQQSASHSANSTQSQ. Ser141 is modified (phosphoserine). Over residues 182-191 the composition is skewed to gly residues; it reads NGTGNGTGGE.

This sequence belongs to the TUB family.

It is found in the cytoplasm. Its subcellular location is the nucleus. It localises to the cell projection. The protein resides in the cilium membrane. The protein localises to the rhabdomere. The polypeptide is Protein king tubby (Drosophila erecta (Fruit fly)).